Consider the following 328-residue polypeptide: GTP 3',8-cyclase (328 aa).

One can recognise a Radical SAM core domain in the interval 1-229 (MNTVDYLRIS…ESFVPGNGPA (229 aa)). R8 contributes to the GTP binding site. C15 and C19 together coordinate [4Fe-4S] cluster. Y21 serves as a coordination point for S-adenosyl-L-methionine. Residue C22 participates in [4Fe-4S] cluster binding. Position 60 (R60) interacts with GTP. G64 serves as a coordination point for S-adenosyl-L-methionine. T91 contacts GTP. S115 serves as a coordination point for S-adenosyl-L-methionine. K155 serves as a coordination point for GTP. An S-adenosyl-L-methionine-binding site is contributed by M189. Positions 252 and 255 each coordinate [4Fe-4S] cluster. 257–259 (RMR) is a GTP binding site. C269 serves as a coordination point for [4Fe-4S] cluster.

It belongs to the radical SAM superfamily. MoaA family. Monomer and homodimer. [4Fe-4S] cluster is required as a cofactor.

It catalyses the reaction GTP + AH2 + S-adenosyl-L-methionine = (8S)-3',8-cyclo-7,8-dihydroguanosine 5'-triphosphate + 5'-deoxyadenosine + L-methionine + A + H(+). The protein operates within cofactor biosynthesis; molybdopterin biosynthesis. In terms of biological role, catalyzes the cyclization of GTP to (8S)-3',8-cyclo-7,8-dihydroguanosine 5'-triphosphate. The protein is GTP 3',8-cyclase of Trichodesmium erythraeum (strain IMS101).